The following is a 512-amino-acid chain: Cobyric acid synthase (512 aa).

The 202-residue stretch at 254-455 (EIDIAVVKLP…LHGLFDNKAL (202 aa)) folds into the GATase cobBQ-type domain. Catalysis depends on Cys335, which acts as the Nucleophile. His447 is an active-site residue.

Belongs to the CobB/CobQ family. CobQ subfamily.

Its pathway is cofactor biosynthesis; adenosylcobalamin biosynthesis. Catalyzes amidations at positions B, D, E, and G on adenosylcobyrinic A,C-diamide. NH(2) groups are provided by glutamine, and one molecule of ATP is hydrogenolyzed for each amidation. This is Cobyric acid synthase from Desulforamulus reducens (strain ATCC BAA-1160 / DSM 100696 / MI-1) (Desulfotomaculum reducens).